The following is a 447-amino-acid chain: NADP-specific glutamate dehydrogenase (447 aa).

The substrate site is built by lysine 92, glutamine 113, and lysine 116. The active-site Proton donor is the lysine 128. Glycine 167 is a binding site for substrate. NADP(+)-binding residues include threonine 212 and asparagine 243. Serine 379 serves as a coordination point for substrate.

Belongs to the Glu/Leu/Phe/Val dehydrogenases family. Homohexamer.

The catalysed reaction is L-glutamate + NADP(+) + H2O = 2-oxoglutarate + NH4(+) + NADPH + H(+). Functionally, catalyzes the reversible oxidative deamination of glutamate to alpha-ketoglutarate and ammonia. This chain is NADP-specific glutamate dehydrogenase (gdh), found in Corynebacterium glutamicum (strain ATCC 13032 / DSM 20300 / JCM 1318 / BCRC 11384 / CCUG 27702 / LMG 3730 / NBRC 12168 / NCIMB 10025 / NRRL B-2784 / 534).